A 409-amino-acid chain; its full sequence is Arginine deiminase (409 aa).

The Amidino-cysteine intermediate role is filled by C399.

It belongs to the arginine deiminase family.

It is found in the cytoplasm. The enzyme catalyses L-arginine + H2O = L-citrulline + NH4(+). It participates in amino-acid degradation; L-arginine degradation via ADI pathway; carbamoyl phosphate from L-arginine: step 1/2. This is Arginine deiminase from Borrelia garinii subsp. bavariensis (strain ATCC BAA-2496 / DSM 23469 / PBi) (Borreliella bavariensis).